The sequence spans 174 residues: UPF0340 protein SAR2202 (174 aa).

This sequence belongs to the UPF0340 family.

The polypeptide is UPF0340 protein SAR2202 (Staphylococcus aureus (strain MRSA252)).